The primary structure comprises 257 residues: AN1-type zinc finger protein 2B (257 aa).

AN1-type zinc fingers lie at residues 4-52 and 94-142; these read PDLG…QKDI and KIFT…HPTS. Residues Cys10, Cys15, Cys25, Cys28, Cys33, His36, His42, Cys44, Cys100, Cys105, Cys115, Cys118, Cys123, His126, His132, and Cys134 each contribute to the Zn(2+) site. Residues 141-151 form a VCP/p97-interacting motif (VIM) region; the sequence is TSRAGLAAISR. A disordered region spans residues 153–187; the sequence is QGLASTSTVPSPSRTLPSSSSPSRATPQLPPRTTS. Over residues 156–179 the composition is skewed to low complexity; that stretch reads ASTSTVPSPSRTLPSSSSPSRATP. 3 positions are modified to phosphoserine: Ser163, Ser173, and Ser187. UIM domains lie at 197 to 216 and 221 to 240; these read SEDE…AKPQ and QEEE…AEYQ. Cys254 carries the cysteine methyl ester modification. A lipid anchor (S-geranylgeranyl cysteine) is attached at Cys254. The CAAX motif signature appears at 254-257; that stretch reads CSLC. The propeptide at 255-257 is removed in mature form; sequence SLC.

Binds 'Lys-48'-linked polyubiquitin chains of ubiquitinated proteins. Associates with the proteasome complex; upon exposure to arsenite. Interacts (via VIM motif) with VCP; the interaction is direct. Interacts with BAG6. Interacts with IGF1R (nascent precursor form). Interacts with DERL1, FAF2, NPLOC4 and UFD1; probably through VCP. Post-translationally, phosphorylated by MAPK14. Phosphorylation has no effect on association with the proteasome complex.

The protein resides in the endoplasmic reticulum membrane. Its function is as follows. Plays a role in protein homeostasis by regulating both the translocation and the ubiquitin-mediated proteasomal degradation of nascent proteins at the endoplasmic reticulum. It is involved in the regulation of signal-mediated translocation of proteins into the endoplasmic reticulum. It also plays a role in the ubiquitin-mediated proteasomal degradation of proteins for which signal-mediated translocation to the endoplasmic reticulum has failed. May therefore function in the endoplasmic reticulum stress-induced pre-emptive quality control, a mechanism that selectively attenuates the translocation of newly synthesized proteins into the endoplasmic reticulum and reroutes them to the cytosol for proteasomal degradation. By controlling the steady-state expression of the IGF1R receptor, indirectly regulates the insulin-like growth factor receptor signaling pathway. In Rattus norvegicus (Rat), this protein is AN1-type zinc finger protein 2B.